The following is a 119-amino-acid chain: uncharacterized protein (119 aa).

The tract at residues 67–119 is disordered; the sequence is LGLKEVQKKSNEGLNEVQGVADINKQKRPANSQDSSSVEGDIQNFLEKVTGKN. The segment covering 95 to 104 has biased composition (polar residues); sequence PANSQDSSSV.

This is an uncharacterized protein from Anabaena variabilis.